Here is a 353-residue protein sequence, read N- to C-terminus: Probable dual-specificity RNA methyltransferase RlmN (353 aa).

Residue E95 is the Proton acceptor of the active site. Positions 103–333 constitute a Radical SAM core domain; sequence DGGRKTICIS…PILNRRSPGR (231 aa). C110 and C339 form a disulfide bridge. 3 residues coordinate [4Fe-4S] cluster: C117, C121, and C124. Residues 164 to 165, S196, 219 to 221, and N296 each bind S-adenosyl-L-methionine; these read GE and SLN. C339 serves as the catalytic S-methylcysteine intermediate.

The protein belongs to the radical SAM superfamily. RlmN family. [4Fe-4S] cluster serves as cofactor.

The protein localises to the cytoplasm. It carries out the reaction adenosine(2503) in 23S rRNA + 2 reduced [2Fe-2S]-[ferredoxin] + 2 S-adenosyl-L-methionine = 2-methyladenosine(2503) in 23S rRNA + 5'-deoxyadenosine + L-methionine + 2 oxidized [2Fe-2S]-[ferredoxin] + S-adenosyl-L-homocysteine. The catalysed reaction is adenosine(37) in tRNA + 2 reduced [2Fe-2S]-[ferredoxin] + 2 S-adenosyl-L-methionine = 2-methyladenosine(37) in tRNA + 5'-deoxyadenosine + L-methionine + 2 oxidized [2Fe-2S]-[ferredoxin] + S-adenosyl-L-homocysteine. In terms of biological role, specifically methylates position 2 of adenine 2503 in 23S rRNA and position 2 of adenine 37 in tRNAs. This Leptospira biflexa serovar Patoc (strain Patoc 1 / Ames) protein is Probable dual-specificity RNA methyltransferase RlmN.